We begin with the raw amino-acid sequence, 414 residues long: Histidine--tRNA ligase (414 aa).

The protein belongs to the class-II aminoacyl-tRNA synthetase family. In terms of assembly, homodimer.

The protein resides in the cytoplasm. It catalyses the reaction tRNA(His) + L-histidine + ATP = L-histidyl-tRNA(His) + AMP + diphosphate + H(+). This Rickettsia rickettsii (strain Iowa) protein is Histidine--tRNA ligase.